The chain runs to 261 residues: DNA-directed RNA polymerase subunit Rpo3 (261 aa).

It belongs to the archaeal Rpo3/eukaryotic RPB3 RNA polymerase subunit family. As to quaternary structure, part of the RNA polymerase complex.

It is found in the cytoplasm. The catalysed reaction is RNA(n) + a ribonucleoside 5'-triphosphate = RNA(n+1) + diphosphate. In terms of biological role, DNA-dependent RNA polymerase (RNAP) catalyzes the transcription of DNA into RNA using the four ribonucleoside triphosphates as substrates. The polypeptide is DNA-directed RNA polymerase subunit Rpo3 (Pyrococcus furiosus (strain ATCC 43587 / DSM 3638 / JCM 8422 / Vc1)).